The following is a 162-amino-acid chain: MAEEKTYPMTAEGLAKLQAELDDLITNKRPAITSRIQEARSFGDLSENSEYQSAKDEQAFVEGRVKQLQQMIQFAQVIDASSASKNVVTLGKKISFKEVPDGDEETYTIVGSAESDPLSGKISNDSPMGKALLDHKTGDKVEIPLPENHSVTVEILHVSKAK.

Residues 48 to 76 are a coiled coil; that stretch reads NSEYQSAKDEQAFVEGRVKQLQQMIQFAQ. The disordered stretch occupies residues 111–132; sequence GSAESDPLSGKISNDSPMGKAL.

This sequence belongs to the GreA/GreB family.

Its function is as follows. Necessary for efficient RNA polymerase transcription elongation past template-encoded arresting sites. The arresting sites in DNA have the property of trapping a certain fraction of elongating RNA polymerases that pass through, resulting in locked ternary complexes. Cleavage of the nascent transcript by cleavage factors such as GreA or GreB allows the resumption of elongation from the new 3'terminus. GreA releases sequences of 2 to 3 nucleotides. This is Transcription elongation factor GreA from Oenococcus oeni (strain ATCC BAA-331 / PSU-1).